Reading from the N-terminus, the 327-residue chain is Phenylalanine--tRNA ligase alpha subunit (327 aa).

E252 provides a ligand contact to Mg(2+).

Belongs to the class-II aminoacyl-tRNA synthetase family. Phe-tRNA synthetase alpha subunit type 1 subfamily. Tetramer of two alpha and two beta subunits. Mg(2+) is required as a cofactor.

The protein resides in the cytoplasm. It carries out the reaction tRNA(Phe) + L-phenylalanine + ATP = L-phenylalanyl-tRNA(Phe) + AMP + diphosphate + H(+). The polypeptide is Phenylalanine--tRNA ligase alpha subunit (Photobacterium profundum (strain SS9)).